We begin with the raw amino-acid sequence, 323 residues long: MKKNKDVLLKNKILKKLNIINIKNLDNIKEKLKKPDWIKIKIPVNTSRIYQIKNALRKNNLYSVCEEAHCPNLSECFNNGTATFMILGSICTRNCPFCAVFHGRPNPVNVEEPQKLSDTIFDMGINYVVITSVVRDDLYDGGAEHFVNCIKAIKNKNQVKIEILVPDFRGRIELILNIFNNALPDIFNHNIENVPRLYKKIRPGANYQRSLLLLESFKKKYCSVLTKSGLMLGLGEKDVEIIQVMKDLYSSGVTLLTVGQYLQPSIHHLPVKRYIPLSEFENIKKEALSIGFTNAFCGPFVRSSYHASFQSHLPIKNNDINNI.

7 residues coordinate [4Fe-4S] cluster: Cys65, Cys70, Cys76, Cys91, Cys95, Cys98, and Ser304. The Radical SAM core domain maps to 77–293; that stretch reads FNNGTATFMI…KKEALSIGFT (217 aa).

The protein belongs to the radical SAM superfamily. Lipoyl synthase family. The cofactor is [4Fe-4S] cluster.

The protein localises to the cytoplasm. It carries out the reaction [[Fe-S] cluster scaffold protein carrying a second [4Fe-4S](2+) cluster] + N(6)-octanoyl-L-lysyl-[protein] + 2 oxidized [2Fe-2S]-[ferredoxin] + 2 S-adenosyl-L-methionine + 4 H(+) = [[Fe-S] cluster scaffold protein] + N(6)-[(R)-dihydrolipoyl]-L-lysyl-[protein] + 4 Fe(3+) + 2 hydrogen sulfide + 2 5'-deoxyadenosine + 2 L-methionine + 2 reduced [2Fe-2S]-[ferredoxin]. It participates in protein modification; protein lipoylation via endogenous pathway; protein N(6)-(lipoyl)lysine from octanoyl-[acyl-carrier-protein]: step 2/2. In terms of biological role, catalyzes the radical-mediated insertion of two sulfur atoms into the C-6 and C-8 positions of the octanoyl moiety bound to the lipoyl domains of lipoate-dependent enzymes, thereby converting the octanoylated domains into lipoylated derivatives. This Buchnera aphidicola subsp. Acyrthosiphon pisum (strain 5A) protein is Lipoyl synthase.